Reading from the N-terminus, the 61-residue chain is Lens epithelial cell protein LEP503 (61 aa).

In terms of tissue distribution, preferentially expressed in the lens epithelial cells.

The protein is Lens epithelial cell protein LEP503 (Lenep) of Rattus norvegicus (Rat).